A 122-amino-acid polypeptide reads, in one-letter code: Large ribosomal subunit protein uL14 (122 aa).

Belongs to the universal ribosomal protein uL14 family. As to quaternary structure, part of the 50S ribosomal subunit. Forms a cluster with proteins L3 and L19. In the 70S ribosome, L14 and L19 interact and together make contacts with the 16S rRNA in bridges B5 and B8.

Functionally, binds to 23S rRNA. Forms part of two intersubunit bridges in the 70S ribosome. The chain is Large ribosomal subunit protein uL14 from Paenarthrobacter aurescens (strain TC1).